The sequence spans 153 residues: Endoribonuclease YbeY (153 aa).

Zn(2+) contacts are provided by His-114, His-118, and His-124.

This sequence belongs to the endoribonuclease YbeY family. It depends on Zn(2+) as a cofactor.

Its subcellular location is the cytoplasm. Its function is as follows. Single strand-specific metallo-endoribonuclease involved in late-stage 70S ribosome quality control and in maturation of the 3' terminus of the 16S rRNA. This is Endoribonuclease YbeY from Shewanella baltica (strain OS223).